Reading from the N-terminus, the 164-residue chain is FMN reductase (NADH) RutF (164 aa).

This sequence belongs to the non-flavoprotein flavin reductase family. RutF subfamily.

It catalyses the reaction FMNH2 + NAD(+) = FMN + NADH + 2 H(+). Catalyzes the reduction of FMN to FMNH2 which is used to reduce pyrimidine by RutA via the Rut pathway. This is FMN reductase (NADH) RutF from Klebsiella pneumoniae (strain 342).